The sequence spans 175 residues: Rubredoxin-1 (175 aa).

Rubredoxin-like domains are found at residues 1–53 (MARY…FVLI) and 119–170 (FLKW…YVLY). Fe cation-binding residues include cysteine 6, cysteine 9, cysteine 39, cysteine 42, cysteine 124, cysteine 127, cysteine 157, and cysteine 160.

The protein belongs to the rubredoxin family. Requires Fe(3+) as cofactor.

Its subcellular location is the cytoplasm. Its pathway is hydrocarbon metabolism; alkane degradation. Involved in the hydrocarbon hydroxylating system, which transfers electrons from NADH to rubredoxin reductase and then through rubredoxin to alkane 1 monooxygenase. This chain is Rubredoxin-1 (alkG), found in Pseudomonas putida (Arthrobacter siderocapsulatus).